The following is a 101-amino-acid chain: Small ribosomal subunit protein uS14 (101 aa).

It belongs to the universal ribosomal protein uS14 family. Part of the 30S ribosomal subunit. Contacts proteins S3 and S10.

Its function is as follows. Binds 16S rRNA, required for the assembly of 30S particles and may also be responsible for determining the conformation of the 16S rRNA at the A site. The protein is Small ribosomal subunit protein uS14 of Cellvibrio japonicus (strain Ueda107) (Pseudomonas fluorescens subsp. cellulosa).